We begin with the raw amino-acid sequence, 111 residues long: NADH-ubiquinone oxidoreductase chain 3 (111 aa).

3 helical membrane passes run 1-21 (MLVL…FYIG), 56-76 (FFIM…FLGI), and 84-104 (LISF…EWWY).

It belongs to the complex I subunit 3 family.

It is found in the mitochondrion membrane. The enzyme catalyses a ubiquinone + NADH + 5 H(+)(in) = a ubiquinol + NAD(+) + 4 H(+)(out). In terms of biological role, core subunit of the mitochondrial membrane respiratory chain NADH dehydrogenase (Complex I) that is believed to belong to the minimal assembly required for catalysis. Complex I functions in the transfer of electrons from NADH to the respiratory chain. The immediate electron acceptor for the enzyme is believed to be ubiquinone. The chain is NADH-ubiquinone oxidoreductase chain 3 (ND3) from Ascaris suum (Pig roundworm).